The following is a 290-amino-acid chain: Protein male abnormal 3 (290 aa).

2 consecutive DNA-binding regions (DM) follow at residues 28-74 (CQRC…SKKK) and 94-142 (CARC…KLRR). Disordered regions lie at residues 139–167 (KLRRSQQKSRDGKEPKRNSRRKSKDMDME) and 179–202 (IIGTSASPSPSSTTDTMSPSLSMS). The span at 146 to 155 (KSRDGKEPKR) shows a compositional bias: basic and acidic residues. Residues 182-202 (TSASPSPSSTTDTMSPSLSMS) show a composition bias toward low complexity.

As to expression, expression is undetectable in hermaphrodites, but persists in males. In males, expressed in cells of the tail tip.

The protein localises to the nucleus. Transcription factor which binds the DNA motif 5'-[CGA][TCA][TA]ACAATGT[AT][TGA]C-3', probably as a monomer. Acts partially redundantly with the transcription factor dmd-3 to coordinate tail tip cell fusion and retraction and thereby regulate male tail tip morphogenesis. Promotes male-specific development of two tissues, the peripheral nervous system and the intestine. In the peripheral nervous system, directs differentiation of sensory ray neuroblasts into peripheral sense organs. In the intestine, causes repression of vitellogenin gene transcription. This chain is Protein male abnormal 3, found in Caenorhabditis elegans.